The primary structure comprises 247 residues: ATP synthase subunit a (247 aa).

The next 6 helical transmembrane spans lie at 26–46, 85–105, 115–135, 141–161, 178–198, and 205–225; these read ITNN…LFYV, YFPL…IGLL, IIFT…INFF, FFNL…LVVI, FANM…IFNV, and ISFL…CIAI.

The protein belongs to the ATPase A chain family. As to quaternary structure, F-type ATPases have 2 components, CF(1) - the catalytic core - and CF(0) - the membrane proton channel. CF(1) has five subunits: alpha(3), beta(3), gamma(1), delta(1), epsilon(1). CF(0) has three main subunits: a, b and c.

The protein resides in the mitochondrion inner membrane. In terms of biological role, mitochondrial membrane ATP synthase (F(1)F(0) ATP synthase or Complex V) produces ATP from ADP in the presence of a proton gradient across the membrane which is generated by electron transport complexes of the respiratory chain. F-type ATPases consist of two structural domains, F(1) - containing the extramembraneous catalytic core and F(0) - containing the membrane proton channel, linked together by a central stalk and a peripheral stalk. During catalysis, ATP synthesis in the catalytic domain of F(1) is coupled via a rotary mechanism of the central stalk subunits to proton translocation. Key component of the proton channel; it may play a direct role in the translocation of protons across the membrane. In Acanthamoeba castellanii (Amoeba), this protein is ATP synthase subunit a (ATP6).